Reading from the N-terminus, the 478-residue chain is Serralysin C (478 aa).

A propeptide spanning residues 1-17 (MEKNLSSRDDDALHSLS) is cleaved from the precursor. Histidine 187 provides a ligand contact to Zn(2+). The active site involves glutamate 188. Positions 191 and 227 each coordinate Zn(2+). The Ca(2+) site is built by arginine 264, glycine 266, aspartate 296, glycine 298, glycine 299, aspartate 301, threonine 338, glutamate 340, glycine 345, glycine 347, aspartate 349, asparagine 354, alanine 356, asparagine 358, glycine 362, glycine 363, alanine 364, glycine 365, aspartate 367, glycine 371, glycine 372, glycine 374, aspartate 376, glycine 380, glycine 381, glycine 383, aspartate 385, aspartate 394, aspartate 401, and aspartate 411. 2 Hemolysin-type calcium-binding repeats span residues 343-360 (IGGSGNDLLIGNNADNTL) and 361-378 (RGGAGDDVLFGGSGADRL).

It belongs to the peptidase M10B family. Requires Ca(2+) as cofactor. The cofactor is Zn(2+).

It is found in the secreted. The catalysed reaction is Preferential cleavage of bonds with hydrophobic residues in P1'.. The chain is Serralysin C (prtC) from Dickeya chrysanthemi (Pectobacterium chrysanthemi).